A 318-amino-acid polypeptide reads, in one-letter code: Malate dehydrogenase (318 aa).

NAD(+)-binding positions include 10 to 15 (GGGQIG) and Asp-34. Arg-83 and Arg-89 together coordinate substrate. NAD(+)-binding positions include Asn-96 and 119 to 121 (ISN). Substrate contacts are provided by Asn-121 and Arg-152. His-176 serves as the catalytic Proton acceptor.

This sequence belongs to the LDH/MDH superfamily. MDH type 3 family.

The catalysed reaction is (S)-malate + NAD(+) = oxaloacetate + NADH + H(+). Catalyzes the reversible oxidation of malate to oxaloacetate. This Geotalea daltonii (strain DSM 22248 / JCM 15807 / FRC-32) (Geobacter daltonii) protein is Malate dehydrogenase.